The primary structure comprises 442 residues: tRNA(Ile)-lysidine synthase (442 aa).

28 to 33 (SGGLDS) provides a ligand contact to ATP.

It belongs to the tRNA(Ile)-lysidine synthase family.

Its subcellular location is the cytoplasm. It carries out the reaction cytidine(34) in tRNA(Ile2) + L-lysine + ATP = lysidine(34) in tRNA(Ile2) + AMP + diphosphate + H(+). Ligates lysine onto the cytidine present at position 34 of the AUA codon-specific tRNA(Ile) that contains the anticodon CAU, in an ATP-dependent manner. Cytidine is converted to lysidine, thus changing the amino acid specificity of the tRNA from methionine to isoleucine. In Pseudomonas aeruginosa (strain ATCC 15692 / DSM 22644 / CIP 104116 / JCM 14847 / LMG 12228 / 1C / PRS 101 / PAO1), this protein is tRNA(Ile)-lysidine synthase.